A 282-amino-acid polypeptide reads, in one-letter code: Fused uL13/uS9 ribosomal subunit protein (282 aa).

The segment at 1–141 (MLLMIINGEG…LGEISELLGA (141 aa)) is large ribosomal subunit protein uL13. A small ribosomal subunit protein uS9 region spans residues 150 to 282 (MKKVIHTSGK…ARARRQKSYR (133 aa)). The interval 259-282 (DPRRSEPKKYGGRGARARRQKSYR) is disordered. The span at 273–282 (ARARRQKSYR) shows a compositional bias: basic residues.

In the N-terminal section; belongs to the universal ribosomal protein uL13 family. It in the C-terminal section; belongs to the universal ribosomal protein uS9 family. In terms of assembly, L13 is part of the 50S ribosomal subunit. S9 is part of the 30S ribosomal subunit.

L13 protein is one of the early assembly proteins of the 50S ribosomal subunit, although it is not seen to bind rRNA by itself. It is important during the early stages of 50S assembly. The protein is Fused uL13/uS9 ribosomal subunit protein (rpl13/rps9) of Methanothermobacter thermautotrophicus (strain ATCC 29096 / DSM 1053 / JCM 10044 / NBRC 100330 / Delta H) (Methanobacterium thermoautotrophicum).